We begin with the raw amino-acid sequence, 698 residues long: Serotransferrin (698 aa).

A signal peptide spans 1 to 19; that stretch reads MRFAVGALLACAALGLCLA. Transferrin-like domains lie at 25-347 and 360-683; these read VKWC…NQRE and VKWC…NIRK. 2 cysteine pairs are disulfide-bonded: cysteine 28–cysteine 67 and cysteine 38–cysteine 58. The residue at position 42 (arginine 42) is a Dimethylated arginine. The Fe(3+) site is built by aspartate 82 and tyrosine 114. 8 disulfides stabilise this stretch: cysteine 137–cysteine 213, cysteine 156–cysteine 350, cysteine 177–cysteine 193, cysteine 180–cysteine 196, cysteine 190–cysteine 198, cysteine 246–cysteine 260, cysteine 363–cysteine 395, and cysteine 373–cysteine 386. The hydrogencarbonate site is built by threonine 139, arginine 143, alanine 145, and glycine 146. A Fe(3+)-binding site is contributed by tyrosine 207. Histidine 268 contacts Fe(3+). Position 388 is a phosphoserine (serine 388). Aspartate 410 and tyrosine 447 together coordinate Fe(3+). Cystine bridges form between cysteine 420/cysteine 693, cysteine 435/cysteine 656, cysteine 471/cysteine 542, cysteine 495/cysteine 684, cysteine 505/cysteine 519, cysteine 516/cysteine 525, cysteine 582/cysteine 596, and cysteine 634/cysteine 639. Residues threonine 473, arginine 477, alanine 479, and glycine 480 each coordinate hydrogencarbonate. Asparagine 512 carries an N-linked (GlcNAc...) asparagine glycan. Tyrosine 536 contacts Fe(3+). A Fe(3+)-binding site is contributed by histidine 604. Serine 685 carries the post-translational modification Phosphoserine.

It belongs to the transferrin family. In terms of assembly, monomer. Part of a complex composed of SLC40A1/ferroportin, TF/transferrin and HEPH/hephaestin that transfers iron from cells to transferrin. In terms of tissue distribution, expressed by the liver and secreted in plasma.

Its subcellular location is the secreted. In terms of biological role, transferrins are iron binding transport proteins which can bind two Fe(3+) ions in association with the binding of an anion, usually bicarbonate. It is responsible for the transport of iron from sites of absorption and heme degradation to those of storage and utilization. Serum transferrin may also have a further role in stimulating cell proliferation. The polypeptide is Serotransferrin (Tf) (Rattus norvegicus (Rat)).